A 246-amino-acid chain; its full sequence is DNA-directed RNA polymerase subunit alpha (246 aa).

It belongs to the RNA polymerase alpha chain family. In plastids the minimal PEP RNA polymerase catalytic core is composed of four subunits: alpha, beta, beta', and beta''. When a (nuclear-encoded) sigma factor is associated with the core the holoenzyme is formed, which can initiate transcription (Potential).

Its subcellular location is the plastid. It catalyses the reaction RNA(n) + a ribonucleoside 5'-triphosphate = RNA(n+1) + diphosphate. DNA-dependent RNA polymerase catalyzes the transcription of DNA into RNA using the four ribonucleoside triphosphates as substrates. In Helicosporidium sp. subsp. Simulium jonesii (Green alga), this protein is DNA-directed RNA polymerase subunit alpha (rpoA).